The chain runs to 461 residues: O-methyltransferase CTB2 (461 aa).

Asp288 contacts S-adenosyl-L-methionine. His339 (proton acceptor) is an active-site residue.

This sequence belongs to the class I-like SAM-binding methyltransferase superfamily. Cation-independent O-methyltransferase family. COMT subfamily.

Its pathway is mycotoxin biosynthesis. In terms of biological role, O-methyltransferase; part of the gene cluster that mediates the biosynthesis of cercosporin, a light-activated, non-host-selective toxin. The perylenequinone chromophore of cercosporin absorbs light energy to attain an electronically-activated triplet state and produces active oxygen species such as the hydroxyl radical, superoxide, hydrogen peroxide or singlet oxygen upon reaction with oxygen molecules. These reactive oxygen species cause damage to various cellular components including lipids, proteins and nucleic acids. The first step of cercosporin biosynthesis is performed by the polyketide synthase CTB1 which catalyzes the formation of nor-toralactone. The starter unit acyltransferase (SAT) domain of CTB1 initiates polyketide extension by the selective utilization of acetyl-CoA, which is elongated to the heptaketide in the beta-ketoacyl synthase (KS) domain by successive condensations with six malonyl units introduced by the malonyl acyltransferase (MAT) domain. The product template (PT) domain catalyzes C4-C9 and C2-C11 aldol cyclizations and dehydrations to a trihydroxynaphthalene, which is thought to be delivered to the thioesterase (TE) domain for product release. The bifunctional enzyme CTB3 then methylates nor-toralactone to toralactone before conducting an unusual oxidative aromatic ring opening. The O-methyltransferase CTB2 further methylates the nascent OH-6 of the CBT3 product, blocking further oxidation at this site before the reductase CTB6 reduces the 2-oxopropyl ketone at position C7, giving naphthalene. The FAD-dependent monooxygenase CTB5 in concert with the multicopper oxidase CTB12 are responsible for homodimerization of naphthalene with CTB7 installing the dioxepine moiety, finally producing cercosporin. The fasciclin domain-containing protein CTB11 might act with CTB5 and CTB12 whereas the roles of CTB9 and CTB10 have still to be elucidated. The chain is O-methyltransferase CTB2 from Cercospora nicotianae (Barn spot disease fungus).